A 337-amino-acid chain; its full sequence is Anthranilate phosphoribosyltransferase (337 aa).

Residues Gly81, 84 to 85 (GD), Ser89, 91 to 94 (NVST), 109 to 117 (KHGNRALSS), and Ala121 contribute to the 5-phospho-alpha-D-ribose 1-diphosphate site. Gly81 is an anthranilate binding site. A Mg(2+)-binding site is contributed by Ser93. Asn112 is an anthranilate binding site. Arg167 provides a ligand contact to anthranilate. The Mg(2+) site is built by Asp226 and Glu227.

This sequence belongs to the anthranilate phosphoribosyltransferase family. In terms of assembly, homodimer. Mg(2+) serves as cofactor.

The catalysed reaction is N-(5-phospho-beta-D-ribosyl)anthranilate + diphosphate = 5-phospho-alpha-D-ribose 1-diphosphate + anthranilate. Its pathway is amino-acid biosynthesis; L-tryptophan biosynthesis; L-tryptophan from chorismate: step 2/5. Catalyzes the transfer of the phosphoribosyl group of 5-phosphorylribose-1-pyrophosphate (PRPP) to anthranilate to yield N-(5'-phosphoribosyl)-anthranilate (PRA). The chain is Anthranilate phosphoribosyltransferase from Bradyrhizobium sp. (strain ORS 278).